The sequence spans 71 residues: AKMNLSSYILILTFSLFSQGILLSASKSIRNLDDDMVFNTFRLGKAFQKEDTAEKSVIAPSLEQYKSDESS.

A signal peptide spans A1–G20.

Belongs to the melanin-concentrating hormone family.

It is found in the secreted. This chain is Pro-MCH (PMCH), found in Hylobates lar (Lar gibbon).